The sequence spans 868 residues: Protein translocase subunit SecA (868 aa).

ATP contacts are provided by residues Gln88, 106-110, and Asp509; that span reads GEGKT. The span at 816–827 shows a compositional bias: polar residues; the sequence is NAENEPLNYNNQ. Positions 816-868 are disordered; it reads NAENEPLNYNNQGEDENFTPEKKIPRNAPCPCGSGKKYKDCHGKSGPKKGIFA. Residues Cys845, Cys847, Cys856, and His857 each coordinate Zn(2+).

The protein belongs to the SecA family. As to quaternary structure, monomer and homodimer. Part of the essential Sec protein translocation apparatus which comprises SecA, SecYEG and auxiliary proteins SecDF-YajC and YidC. It depends on Zn(2+) as a cofactor.

The protein resides in the cell inner membrane. The protein localises to the cytoplasm. It carries out the reaction ATP + H2O + cellular proteinSide 1 = ADP + phosphate + cellular proteinSide 2.. Functionally, part of the Sec protein translocase complex. Interacts with the SecYEG preprotein conducting channel. Has a central role in coupling the hydrolysis of ATP to the transfer of proteins into and across the cell membrane, serving as an ATP-driven molecular motor driving the stepwise translocation of polypeptide chains across the membrane. The chain is Protein translocase subunit SecA from Campylobacter concisus (strain 13826).